A 273-amino-acid chain; its full sequence is Ribosomal RNA small subunit methyltransferase A (273 aa).

Asparagine 18, leucine 20, glycine 45, glutamate 66, aspartate 91, and asparagine 113 together coordinate S-adenosyl-L-methionine.

The protein belongs to the class I-like SAM-binding methyltransferase superfamily. rRNA adenine N(6)-methyltransferase family. RsmA subfamily.

Its subcellular location is the cytoplasm. The enzyme catalyses adenosine(1518)/adenosine(1519) in 16S rRNA + 4 S-adenosyl-L-methionine = N(6)-dimethyladenosine(1518)/N(6)-dimethyladenosine(1519) in 16S rRNA + 4 S-adenosyl-L-homocysteine + 4 H(+). In terms of biological role, specifically dimethylates two adjacent adenosines (A1518 and A1519) in the loop of a conserved hairpin near the 3'-end of 16S rRNA in the 30S particle. May play a critical role in biogenesis of 30S subunits. The sequence is that of Ribosomal RNA small subunit methyltransferase A from Shigella flexneri.